Reading from the N-terminus, the 321-residue chain is Protein stand still (321 aa).

Coiled-coil stretches lie at residues 74–103 (KLHE…RKKA) and 147–167 (KQEQ…KANL). Over residues 146–162 (HKQEQEGATRKLEDSTS) the composition is skewed to basic and acidic residues. 2 disordered regions span residues 146–166 (HKQE…DKAN) and 227–248 (QVPP…MEDV). A compositionally biased stretch (low complexity) spans 235–244 (SKSSGSLASS). The stretch at 272–292 (QRDVLQRLERSMAQISQELHC) forms a coiled coil.

Germ cells specific. Expressed in all germ cells. During the first instar larvae, it is expressed in all germ cells of both sexes. In third instar larvae, it decreases in male germ cells while it remains in female germ cells. In adult ovary, it is expressed in cells of the germarium, including the stem cells. In the early previtellogenic stages, it is highly expressed in the nurse cells. During vitellogenesis, it is not translocated into the maturing egg. In testes, it is only expressed during some steps of male germline differentiation. At the apex testis, it is expressed at low level in stem cells and dividing spermatogonia, while in newly formed 16-cell cysts of primary spermatocytes, it is transiently but strongly expressed before vanishing during spermatocyte growth phase.

Its subcellular location is the nucleus. Essential in the female germline for proper survival, sex determination and differentiation. Participates in the transcriptional activation of Otu. Does not regulate the expression of Ovo. This Drosophila melanogaster (Fruit fly) protein is Protein stand still (stil).